Reading from the N-terminus, the 1161-residue chain is PAN2-PAN3 deadenylation complex catalytic subunit pan2 (1161 aa).

WD repeat units follow at residues 20-59 (GLPT…RYTS), 102-145 (AHEE…DKLQ), and 276-315 (ANVS…HFNE). Residues 316 to 452 (MSKEVEFADV…GAKLNGEAED (137 aa)) form a linker region. Residues 453–822 (DPLLKYSNVE…IPCVLAYQAR (370 aa)) form the USP domain. In terms of domain architecture, Exonuclease spans 871-1049 (VALDTEFVDL…VEDARMALRL (179 aa)). Residues aspartate 874, glutamate 876, aspartate 983, and aspartate 1042 each coordinate a divalent metal cation. A disordered region spans residues 1094 to 1161 (GTAVTMQNNS…GDFFGGSPLK (68 aa)). Positions 1097-1110 (VTMQNNSGRNTPST) are enriched in polar residues. Low complexity predominate over residues 1116–1129 (AAAAAATTSAPATP). The segment covering 1145–1155 (TFGGPGTGDFF) has biased composition (gly residues).

Belongs to the peptidase C19 family. PAN2 subfamily. Forms a heterotrimer with an asymmetric homodimer of the regulatory subunit pan3 to form the poly(A)-nuclease (PAN) deadenylation complex. Requires a divalent metal cation as cofactor.

Its subcellular location is the cytoplasm. The enzyme catalyses Exonucleolytic cleavage of poly(A) to 5'-AMP.. Positively regulated by the regulatory subunit pan3. Catalytic subunit of the poly(A)-nuclease (PAN) deadenylation complex, one of two cytoplasmic mRNA deadenylases involved in mRNA turnover. PAN specifically shortens poly(A) tails of RNA and the activity is stimulated by poly(A)-binding protein pab1. PAN deadenylation is followed by rapid degradation of the shortened mRNA tails by the CCR4-NOT complex. Deadenylated mRNAs are then degraded by two alternative mechanisms, namely exosome-mediated 3'-5' exonucleolytic degradation, or deadenylation-dependent mRNA decaping and subsequent 5'-3' exonucleolytic degradation by xrn1. May also be involved in post-transcriptional maturation of mRNA poly(A) tails. The polypeptide is PAN2-PAN3 deadenylation complex catalytic subunit pan2 (Aspergillus clavatus (strain ATCC 1007 / CBS 513.65 / DSM 816 / NCTC 3887 / NRRL 1 / QM 1276 / 107)).